The chain runs to 166 residues: Tetranectin-like protein (166 aa).

Cystine bridges form between C37–C47, C64–C160, and C136–C152. The C-type lectin domain maps to 43–161 (IHKKCYLASR…CRSEKRYICE (119 aa)).

This chain is Tetranectin-like protein, found in Carcharhinus perezii (Reef shark).